The chain runs to 810 residues: Zinc finger transcription factor YRR1 (810 aa).

Positions 1–47 (MKRRSDALLGSFQATNVTPPSDNSNSTAGGANGSNSGTPTSTSGKKR) are disordered. The span at 12 to 22 (FQATNVTPPSD) shows a compositional bias: polar residues. Over residues 23 to 43 (NSNSTAGGANGSNSGTPTSTS) the composition is skewed to low complexity. Positions 54-82 (CGFCRRRKLRCDQQKPMCSTCISRNLTTC) form a DNA-binding region, zn(2)-C6 fungal-type. The interval 722–742 (ELDPQSDNPSSEAKIVSDRQR) is disordered.

It is found in the cytoplasm. It localises to the nucleus. In terms of biological role, transcription factor involved in the regulation of multidrug resistance genes. Acts in concert with YRR1. This chain is Zinc finger transcription factor YRR1 (YRR1), found in Saccharomyces cerevisiae (strain ATCC 204508 / S288c) (Baker's yeast).